Consider the following 96-residue polypeptide: Co-chaperonin GroES (96 aa).

Belongs to the GroES chaperonin family. In terms of assembly, heptamer of 7 subunits arranged in a ring. Interacts with the chaperonin GroEL.

The protein resides in the cytoplasm. Functionally, together with the chaperonin GroEL, plays an essential role in assisting protein folding. The GroEL-GroES system forms a nano-cage that allows encapsulation of the non-native substrate proteins and provides a physical environment optimized to promote and accelerate protein folding. GroES binds to the apical surface of the GroEL ring, thereby capping the opening of the GroEL channel. In Paracidovorax citrulli (strain AAC00-1) (Acidovorax citrulli), this protein is Co-chaperonin GroES.